We begin with the raw amino-acid sequence, 186 residues long: MSVAETKKSVEQKMQKSIEAFKADLAKVRTGRAHVGLLDHVQVDYYGSMVPISQVANIGLGDARTITVQPWEKKMVGAVEKAIRDCDLGLNPATMGEVIRVPMPPLTEERRKELTKVVKGEAEGAKIAVRNLRRDANEQFKKLVKDKAISEDDERRGQDDVQKLTDKYVAEIDKMVAEKEKEIMTV.

Belongs to the RRF family.

Its subcellular location is the cytoplasm. Its function is as follows. Responsible for the release of ribosomes from messenger RNA at the termination of protein biosynthesis. May increase the efficiency of translation by recycling ribosomes from one round of translation to another. The polypeptide is Ribosome-recycling factor (Cupriavidus pinatubonensis (strain JMP 134 / LMG 1197) (Cupriavidus necator (strain JMP 134))).